We begin with the raw amino-acid sequence, 798 residues long: ATP-dependent RecD2 DNA helicase (798 aa).

An ATP-binding site is contributed by 370-374; sequence GTGKT.

This sequence belongs to the RecD family. RecD2 subfamily. In terms of assembly, interacts with SSB (sbbA).

It is found in the cytoplasm. The protein localises to the nucleoid. It carries out the reaction Couples ATP hydrolysis with the unwinding of duplex DNA at the replication fork by translocating in the 5'-3' direction. This creates two antiparallel DNA single strands (ssDNA). The leading ssDNA polymer is the template for DNA polymerase III holoenzyme which synthesizes a continuous strand.. The catalysed reaction is ATP + H2O = ADP + phosphate + H(+). In vivo may favor replication restart by preventing RecA from binding to blocked replication forks, avoiding unnecessary recombination during replication restart. Acts as a negative modulator of the RecA-ssDNA filament, may dissasemble RecA threads, can act as both a positive and negative regulator of strand exchange. Probably stabilizes or aids normal replication fork progression, is important for survival after treatment with DNA-damaging agents that can result in replication fork stress. Overcomes the inhibition of replication restart by RecA/RecO, probably by displacing RecA. Increasing levels inhibit PriA-dependent DNA replication initiation (but have little effect on ongoing replication) in vitro; may act by disturbing SsbA assembly. Probably has a role in recombinational DNA repair. Does not seem to contribute to mismatch repair. Has 5'-3' helicase activity that is probably ATP-dependent. The protein is ATP-dependent RecD2 DNA helicase of Bacillus subtilis (strain 168).